A 248-amino-acid polypeptide reads, in one-letter code: Pulmonary surfactant-associated protein A (248 aa).

Residues 1-20 (MLLCSLTLTLLWMVASGLEC) form the signal peptide. In terms of domain architecture, Collagen-like spans 28–100 (GSPGIPGTPG…PGERGPPGFP (73 aa)). Residues 29–102 (SPGIPGTPGS…ERGPPGFPAY (74 aa)) are disordered. Proline 30, proline 33, proline 36, proline 42, proline 54, proline 57, proline 63, proline 67, and proline 70 each carry 4-hydroxyproline. Basic and acidic residues predominate over residues 42–51 (PGRDGRDGIK). Pro residues predominate over residues 54-65 (PGPPGPMGPPGG). A compositionally biased stretch (low complexity) spans 69–82 (LPGRDGMTGAPGLP). Residues 84–93 (ERGEKGEPGE) show a composition bias toward basic and acidic residues. The region spanning 132–248 (LAVGEKVFST…LQYRLAICEF (117 aa)) is the C-type lectin domain. 2 cysteine pairs are disulfide-bonded: cysteine 155–cysteine 246 and cysteine 224–cysteine 238. Asparagine 207 is a glycosylation site (N-linked (GlcNAc...) asparagine). Ca(2+)-binding residues include glutamate 215, arginine 217, asparagine 234, and aspartate 235.

It belongs to the SFTPA family. As to quaternary structure, oligomeric complex of 6 set of homotrimers.

It is found in the secreted. Its subcellular location is the extracellular space. It localises to the extracellular matrix. The protein resides in the surface film. In terms of biological role, in presence of calcium ions, it binds to surfactant phospholipids and contributes to lower the surface tension at the air-liquid interface in the alveoli of the mammalian lung and is essential for normal respiration. Enhances the expression of MYO18A/SP-R210 on alveolar macrophages. The polypeptide is Pulmonary surfactant-associated protein A (SFTPA1) (Bos taurus (Bovine)).